A 228-amino-acid chain; its full sequence is LexA repressor (228 aa).

Residues 26 to 46 constitute a DNA-binding region (H-T-H motif); sequence FDEMKDALDLRSKSGIHRLIT. Active-site for autocatalytic cleavage activity residues include S149 and K187.

Belongs to the peptidase S24 family. As to quaternary structure, homodimer.

The catalysed reaction is Hydrolysis of Ala-|-Gly bond in repressor LexA.. In terms of biological role, represses a number of genes involved in the response to DNA damage (SOS response), including recA and lexA. In the presence of single-stranded DNA, RecA interacts with LexA causing an autocatalytic cleavage which disrupts the DNA-binding part of LexA, leading to derepression of the SOS regulon and eventually DNA repair. This chain is LexA repressor, found in Cereibacter sphaeroides (strain ATCC 17025 / ATH 2.4.3) (Rhodobacter sphaeroides).